Reading from the N-terminus, the 705-residue chain is Polyribonucleotide nucleotidyltransferase (705 aa).

Asp-485 and Asp-491 together coordinate Mg(2+). The KH domain maps to 552 to 611 (PKVFTMSINPSKIKDVIGAGGKTINKIIDETGVKIDIKEDGSVFVTAEDYESGKKALAMI). In terms of domain architecture, S1 motif spans 621 to 689 (GEVYLGKVTK…SMGRVNLSRK (69 aa)).

This sequence belongs to the polyribonucleotide nucleotidyltransferase family. Mg(2+) serves as cofactor.

It localises to the cytoplasm. It carries out the reaction RNA(n+1) + phosphate = RNA(n) + a ribonucleoside 5'-diphosphate. In terms of biological role, involved in mRNA degradation. Catalyzes the phosphorolysis of single-stranded polyribonucleotides processively in the 3'- to 5'-direction. This is Polyribonucleotide nucleotidyltransferase from Clostridium novyi (strain NT).